The following is a 458-amino-acid chain: KAT8 regulatory NSL complex subunit 2 (458 aa).

Lys-78 is covalently cross-linked (Glycyl lysine isopeptide (Lys-Gly) (interchain with G-Cter in SUMO2)). The interval 126-182 (ELGSQTPESSRSEASRILDEDSWSDGDQEPITVDQTWRGDPDSEADSIDSDQEDPLK) is disordered. Position 131 is a phosphothreonine (Thr-131). A compositionally biased stretch (basic and acidic residues) spans 135-144 (SRSEASRILD). Phosphoserine is present on residues Ser-147, Ser-149, Ser-168, Ser-172, and Ser-175. The span at 167–178 (DSEADSIDSDQE) shows a compositional bias: acidic residues. The interval 308 to 364 (DVRCSNQSLPMTRHCLTHICQDTNQVLFKCCQGSEEVPCNKPVPVSLSEDPCCPLHF) is required for interaction with other NSL complex members. The segment at 419–458 (QMAGDGCRSQGPRNSEKAPAPLPQSGIATANGKPEPTSVS) is disordered.

In terms of assembly, component of the NSL complex at least composed of KAT8/MOF, KANSL1, KANSL2, KANSL3, MCRS1, PHF20, OGT1/OGT, WDR5 and HCFC1.

It is found in the nucleus. The protein localises to the mitochondrion. Non-catalytic component of the NSL histone acetyltransferase complex, a multiprotein complex that mediates histone H4 acetylation at 'Lys-5'- and 'Lys-8' (H4K5ac and H4K8ac) at transcription start sites and promotes transcription initiation. Required for NSL complex stability and for transcription of intraciliary transport genes in both ciliated and non-ciliated cells by regulating histone H4 acetylation at 'Lys-5'- and 'Lys-12' (H4K5ac and H4K12ac). This is necessary for cilium assembly in ciliated cells and for organization of the microtubule cytoskeleton in non-ciliated cells. Required within the NSL complex to maintain nuclear architecture stability by promoting KAT8-mediated acetylation of lamin LMNA. In Bos taurus (Bovine), this protein is KAT8 regulatory NSL complex subunit 2 (KANSL2).